Reading from the N-terminus, the 226-residue chain is Glutathione S-transferase kappa 1 (226 aa).

16–18 (SPY) contacts glutathione. Residues Lys36 and Lys49 each carry the N6-succinyllysine modification. Asn53 is a glutathione binding site. Lys68 and Lys74 each carry N6-acetyllysine; alternate. Lys68 and Lys74 each carry N6-succinyllysine; alternate. N6-acetyllysine is present on Lys85. Residues Lys93 and Lys116 each carry the N6-acetyllysine; alternate modification. N6-succinyllysine; alternate is present on residues Lys93 and Lys116. N6-succinyllysine is present on Lys144. Position 158 is an N6-acetyllysine; alternate (Lys158). Lys158 carries the N6-succinyllysine; alternate modification. Lys165 is subject to N6-acetyllysine. N6-acetyllysine; alternate is present on residues Lys167 and Lys177. N6-succinyllysine; alternate occurs at positions 167 and 177. Leu183 lines the glutathione pocket. At Lys193 the chain carries N6-succinyllysine. Position 200–201 (200–201 (SD)) interacts with glutathione.

Belongs to the GST superfamily. Kappa family. In terms of assembly, homodimer.

Its subcellular location is the mitochondrion matrix. It carries out the reaction RX + glutathione = an S-substituted glutathione + a halide anion + H(+). Glutathione S-transferase that catalyzes the conjugation of glutathione to exogenous and endogenous compounds. The sequence is that of Glutathione S-transferase kappa 1 (Gstk1) from Rattus norvegicus (Rat).